A 306-amino-acid polypeptide reads, in one-letter code: D-alanine--D-alanine ligase (306 aa).

One can recognise an ATP-grasp domain in the interval 101–300 (RIMLAAAGVP…FGELVTWMVE (200 aa)). 128–182 (MPTPYVLKPNAGGSSVGVFIVREDQAHPPQELTREDWPHGENLLAEEFIPGLELT) is a binding site for ATP. Residues D250, E267, and N269 each contribute to the Mg(2+) site.

The protein belongs to the D-alanine--D-alanine ligase family. The cofactor is Mg(2+). It depends on Mn(2+) as a cofactor.

It localises to the cytoplasm. The catalysed reaction is 2 D-alanine + ATP = D-alanyl-D-alanine + ADP + phosphate + H(+). It functions in the pathway cell wall biogenesis; peptidoglycan biosynthesis. In terms of biological role, cell wall formation. In Xanthobacter autotrophicus (strain ATCC BAA-1158 / Py2), this protein is D-alanine--D-alanine ligase.